We begin with the raw amino-acid sequence, 253 residues long: MLKTRIIPCLDVADGRVVKGVNFVDLRDAGDPVEAARAYDAAGADELCFLDIHATHENRGTMYDLVTRTAEQCFMPLTVGGGVRTHQDVRALLLAGADKVSFNSAAVADPGVVAEAADRFGSQCIVVAIDAKTVAPGRWEIFTHGGRRATGIDAVAFACEMASRGAGEILLTSMDRDGTRAGFNLPLTRAISDAVPIPVIASGGVGTLDHLVEGVTEGGASAVLAASIFHFGEFTIGEAKAHMAAAGIPVRLA.

Catalysis depends on residues aspartate 11 and aspartate 130.

This sequence belongs to the HisA/HisF family. As to quaternary structure, heterodimer of HisH and HisF.

It is found in the cytoplasm. The catalysed reaction is 5-[(5-phospho-1-deoxy-D-ribulos-1-ylimino)methylamino]-1-(5-phospho-beta-D-ribosyl)imidazole-4-carboxamide + L-glutamine = D-erythro-1-(imidazol-4-yl)glycerol 3-phosphate + 5-amino-1-(5-phospho-beta-D-ribosyl)imidazole-4-carboxamide + L-glutamate + H(+). It functions in the pathway amino-acid biosynthesis; L-histidine biosynthesis; L-histidine from 5-phospho-alpha-D-ribose 1-diphosphate: step 5/9. Its function is as follows. IGPS catalyzes the conversion of PRFAR and glutamine to IGP, AICAR and glutamate. The HisF subunit catalyzes the cyclization activity that produces IGP and AICAR from PRFAR using the ammonia provided by the HisH subunit. This chain is Imidazole glycerol phosphate synthase subunit HisF (hisF), found in Cereibacter sphaeroides (strain ATCC 17023 / DSM 158 / JCM 6121 / CCUG 31486 / LMG 2827 / NBRC 12203 / NCIMB 8253 / ATH 2.4.1.) (Rhodobacter sphaeroides).